The primary structure comprises 591 residues: UvrABC system protein C (591 aa).

One can recognise a GIY-YIG domain in the interval 14–91 (DQPGCYLMKD…IKKHDPKYNV (78 aa)). The UVR domain occupies 196-231 (KEVKVELEKKMHKAAEELNFERAKELRDTLGYMEAV).

Belongs to the UvrC family. As to quaternary structure, interacts with UvrB in an incision complex.

Its subcellular location is the cytoplasm. Functionally, the UvrABC repair system catalyzes the recognition and processing of DNA lesions. UvrC both incises the 5' and 3' sides of the lesion. The N-terminal half is responsible for the 3' incision and the C-terminal half is responsible for the 5' incision. The sequence is that of UvrABC system protein C from Halalkalibacterium halodurans (strain ATCC BAA-125 / DSM 18197 / FERM 7344 / JCM 9153 / C-125) (Bacillus halodurans).